The primary structure comprises 282 residues: MEMO1 family protein Cmaq_1590 (282 aa).

Belongs to the MEMO1 family.

This is MEMO1 family protein Cmaq_1590 from Caldivirga maquilingensis (strain ATCC 700844 / DSM 13496 / JCM 10307 / IC-167).